Reading from the N-terminus, the 323-residue chain is Fructose-1,6-bisphosphatase class 1 (323 aa).

E90, D111, L113, and D114 together coordinate Mg(2+). Residues 114–117, Y222, and K253 contribute to the substrate site; that span reads DGSS. E259 contacts Mg(2+).

Belongs to the FBPase class 1 family. As to quaternary structure, homotetramer. Mg(2+) is required as a cofactor.

It is found in the cytoplasm. The catalysed reaction is beta-D-fructose 1,6-bisphosphate + H2O = beta-D-fructose 6-phosphate + phosphate. It functions in the pathway carbohydrate biosynthesis; gluconeogenesis. The chain is Fructose-1,6-bisphosphatase class 1 from Pelobacter propionicus (strain DSM 2379 / NBRC 103807 / OttBd1).